The following is a 104-amino-acid chain: Gastrin (104 aa).

Residues M1 to A21 form the signal peptide. A propeptide spanning residues S22–R58 is cleaved from the precursor. Residues W23–N104 form a disordered region. Residues P25–R37 are compositionally biased toward polar residues. Y87 bears the Sulfotyrosine mark. F92 is modified (phenylalanine amide). At S96 the chain carries Phosphoserine. The propeptide occupies S96–N104. The residue at position 103 (Y103) is a Sulfotyrosine.

The protein belongs to the gastrin/cholecystokinin family. Post-translationally, sulfation on Tyr-87 enhances proteolytic processing, and blocks peptide degradation. Levels of sulfation differ between proteolytically-cleaved gastrins and between tissues.

It is found in the secreted. In terms of biological role, gastrin stimulates the stomach mucosa to produce and secrete hydrochloric acid and the pancreas to secrete its digestive enzymes. It also stimulates smooth muscle contraction and increases blood circulation and water secretion in the stomach and intestine. The chain is Gastrin (Gast) from Rattus norvegicus (Rat).